The following is a 351-amino-acid chain: MPGSAAKGSELSERIESFVETLKRGGGPRSSEEMARETLGLLRQIITDHRWSNAGELMELIRREGRRMTAAQPSETTVGNMVRRVLKIIREEYGRLHGRSDESDQQESLHKLLTSGGLNEDFSFHYAQLQSNIIEAINELLVELEGTMENIAAQALEHIHSNEVIMTIGFSRTVEAFLKEAARKRKFHVIVAECAPFCQGHEMAVNLSKAGIETTVMTDAAIFAVMSRVNKVIIGTKTILANGALRAVTGTHTLALAAKHHSTPLIVCAPMFKLSPQFPNEEDSFHKFVAPEEVLPFTEGDILEKVSVHCPVFDYVPPELITLFISNIGGNAPSYIYRLMSELYHPDDHVL.

Belongs to the eIF-2B alpha/beta/delta subunits family. In terms of assembly, component of the translation initiation factor 2B (eIF2B) complex which is a heterodecamer of two sets of five different subunits: alpha, beta, gamma, delta and epsilon. Subunits alpha, beta and delta comprise a regulatory subcomplex and subunits epsilon and gamma comprise a catalytic subcomplex. Within the complex, the hexameric regulatory complex resides at the center, with the two heterodimeric catalytic subcomplexes bound on opposite sides.

It localises to the cytoplasm. The protein resides in the cytosol. With respect to regulation, activated by the chemical integrated stress response (ISR) inhibitor ISRIB which stimulates guanine nucleotide exchange factor activity for both phosphorylated and unphosphorylated eIF2. Its function is as follows. Acts as a component of the translation initiation factor 2B (eIF2B) complex, which catalyzes the exchange of GDP for GTP on eukaryotic initiation factor 2 (eIF2) gamma subunit. Its guanine nucleotide exchange factor activity is repressed when bound to eIF2 complex phosphorylated on the alpha subunit, thereby limiting the amount of methionyl-initiator methionine tRNA available to the ribosome and consequently global translation is repressed. This chain is Translation initiation factor eIF2B subunit beta (EIF2B2), found in Homo sapiens (Human).